A 359-amino-acid polypeptide reads, in one-letter code: NF-kappa-B inhibitor beta (359 aa).

A phosphoserine; by RPS6KA1 mark is found at serine 19 and serine 23. 6 ANK repeats span residues 57–86 (DGDT…GTEY), 93–122 (LGQT…GVLV), 126–155 (GGHT…SHPR), 206–235 (DGHT…DLNK), 240–269 (CGRT…DPTA), and 273–302 (GGRT…PEPE). The disordered stretch occupies residues 153 to 192 (HPRDASDTYLTQSQDHTPDTSHAPVATDPQPNPGNEEELR). Basic and acidic residues predominate over residues 298 to 308 (APEPEDKDDKL). The interval 298–359 (APEPEDKDDK…KPLPDDPNPA (62 aa)) is disordered. A Phosphoserine modification is found at serine 318. The span at 318–331 (SDSDNRDEGDEYDD) shows a compositional bias: acidic residues. Pro residues predominate over residues 342 to 359 (QPPPSPAAKPLPDDPNPA).

Belongs to the NF-kappa-B inhibitor family. Interacts with THRB (via ligand-binding domain). Interacts with RELA and REL. Interacts with COMMD1. Interacts with inhibitor kappa B-interacting Ras-like NKIRAS1 and NKIRAS2. In terms of processing, phosphorylated by RPS6KA1; followed by degradation. Interaction with NKIRAS1 and NKIRAS2 probably prevents phosphorylation.

The protein resides in the cytoplasm. It localises to the nucleus. Its function is as follows. Inhibits NF-kappa-B by complexing with and trapping it in the cytoplasm. However, the unphosphorylated form resynthesized after cell stimulation is able to bind NF-kappa-B allowing its transport to the nucleus and protecting it to further NFKBIA-dependent inactivation. Association with inhibitor kappa B-interacting NKIRAS1 and NKIRAS2 prevent its phosphorylation rendering it more resistant to degradation, explaining its slower degradation. This Rattus norvegicus (Rat) protein is NF-kappa-B inhibitor beta (Nfkbib).